A 217-amino-acid polypeptide reads, in one-letter code: Probable GTP-binding protein EngB (217 aa).

The EngB-type G domain maps to 29 to 213; it reads GPLEVAFAGR…RQAIGETVGV (185 aa). GTP is bound by residues 37–44, 64–68, 91–94, 158–161, and 192–194; these read GRSNVGKS, GRTQE, DMPG, TKTD, and TSS. Positions 44 and 66 each coordinate Mg(2+).

The protein belongs to the TRAFAC class TrmE-Era-EngA-EngB-Septin-like GTPase superfamily. EngB GTPase family. It depends on Mg(2+) as a cofactor.

Functionally, necessary for normal cell division and for the maintenance of normal septation. This chain is Probable GTP-binding protein EngB, found in Rhizobium leguminosarum bv. trifolii (strain WSM2304).